The primary structure comprises 319 residues: MGGLSLLQLPRDKFRKSSFFVWVIILFQKAFSMPLGVVTNSTLEVTEIDQLVCKDHLASTDQLKSVGLNLEGSGVSTDIPSATKRWGFRSGVPPKVVSYEAGEWAENCYNLEIKKPDGSECLPPPPDGVRGFPRCRYVHKAQGTGPCPGDYAFHKDGAFFLYDRLASTVIYRGVNFAEGVIAFLILAKPKETFLQSPPIREAVNYTENTSSYYATSYLEYEIENFGAQHSTTLFKIDNNTFVRLDRPHTPQFLFQLNDTIHLHQQLSNTTGRLIWTLDANINADIGEWAFWENKKKSLRTTTWRRAVFRSFIAQRDRRR.

Positions 1–32 are cleaved as a signal peptide; sequence MGGLSLLQLPRDKFRKSSFFVWVIILFQKAFS. Asn40 carries an N-linked (GlcNAc...) asparagine; by host glycan. 2 disulfide bridges follow: Cys108–Cys135 and Cys121–Cys147. 5 N-linked (GlcNAc...) asparagine; by host glycosylation sites follow: Asn204, Asn208, Asn238, Asn257, and Asn268.

The protein belongs to the filoviruses glycoprotein family.

The protein localises to the secreted. The polypeptide is Super small secreted glycoprotein (GP) (Sudan ebolavirus (strain Human/Uganda/Gulu/2000) (SEBOV)).